A 703-amino-acid polypeptide reads, in one-letter code: Prolyl 3-hydroxylase 2 (703 aa).

Residues 1–21 (MRESTWVSLLLLLLLPAPQRG) form the signal peptide. The interval 18–40 (PQRGGPQDGRGSPEPEPERGPLQ) is disordered. 4 TPR repeats span residues 42 to 75 (FDLL…HRRL), 144 to 177 (RVPY…NPEH), 205 to 238 (HLES…YFNE), and 301 to 334 (PLHY…HPDD). Asparagine 444, asparagine 455, and asparagine 544 each carry an N-linked (GlcNAc...) asparagine glycan. In terms of domain architecture, Fe2OG dioxygenase spans 552 to 666 (THMVCRTALS…RCAVALWFTL (115 aa)). Positions 575, 577, and 647 each coordinate Fe cation. Arginine 657 is an active-site residue. Residues 700–703 (KDEL) carry the Prevents secretion from ER motif.

The protein belongs to the leprecan family. It depends on Fe cation as a cofactor. Requires L-ascorbate as cofactor. In terms of tissue distribution, detected at low levels in cartilage.

The protein localises to the endoplasmic reticulum. Its subcellular location is the sarcoplasmic reticulum. The protein resides in the golgi apparatus. The catalysed reaction is L-prolyl-[collagen] + 2-oxoglutarate + O2 = trans-3-hydroxy-L-prolyl-[collagen] + succinate + CO2. Functionally, prolyl 3-hydroxylase that catalyzes the post-translational formation of 3-hydroxyproline on collagens. Contributes to proline 3-hydroxylation of collagen COL4A1 and COL1A1 in tendons, the eye sclera and in the eye lens capsule. Has high activity with the type IV collagen COL4A1, and lower activity with COL1A1. Catalyzes hydroxylation of the first Pro in Gly-Pro-Hyp sequences where Hyp is 4-hydroxyproline. Has no activity on substrates that lack 4-hydroxyproline in the third position. The polypeptide is Prolyl 3-hydroxylase 2 (Rattus norvegicus (Rat)).